A 1013-amino-acid polypeptide reads, in one-letter code: Probable outer membrane protein PmpG (1013 aa).

The signal sequence occupies residues M1–A27. In terms of domain architecture, Autotransporter spans G733–F1013.

This sequence belongs to the PMP outer membrane protein family.

It localises to the secreted. Its subcellular location is the cell wall. The protein localises to the cell outer membrane. This is Probable outer membrane protein PmpG (pmpG) from Chlamydia trachomatis serovar D (strain ATCC VR-885 / DSM 19411 / UW-3/Cx).